Consider the following 455-residue polypeptide: EP1-like glycoprotein 2 (455 aa).

Positions 1-22 (MSRFAILVTLALAIATVSVVIA) are cleaved as a signal peptide. The 120-residue stretch at 44 to 163 (EYDASYRFIE…NGKFVWQSFD (120 aa)) folds into the Bulb-type lectin domain. N-linked (GlcNAc...) asparagine glycans are attached at residues asparagine 56, asparagine 106, asparagine 191, asparagine 211, asparagine 241, and asparagine 289. Position 374 is an S-nitrosocysteine (cysteine 374). The region spanning 374–455 (CSGVKGKTVN…NTSSVAYIKY (82 aa)) is the PAN domain. Cystine bridges form between cysteine 410–cysteine 432 and cysteine 414–cysteine 420. Asparagine 446 carries an N-linked (GlcNAc...) asparagine glycan.

The protein localises to the secreted. Its subcellular location is the cell wall. This Arabidopsis thaliana (Mouse-ear cress) protein is EP1-like glycoprotein 2.